The chain runs to 484 residues: Glutamyl-tRNA(Gln) amidotransferase subunit A (484 aa).

Active-site charge relay system residues include lysine 77 and serine 152. The active-site Acyl-ester intermediate is serine 176.

It belongs to the amidase family. GatA subfamily. In terms of assembly, heterotrimer of A, B and C subunits.

The enzyme catalyses L-glutamyl-tRNA(Gln) + L-glutamine + ATP + H2O = L-glutaminyl-tRNA(Gln) + L-glutamate + ADP + phosphate + H(+). In terms of biological role, allows the formation of correctly charged Gln-tRNA(Gln) through the transamidation of misacylated Glu-tRNA(Gln) in organisms which lack glutaminyl-tRNA synthetase. The reaction takes place in the presence of glutamine and ATP through an activated gamma-phospho-Glu-tRNA(Gln). The polypeptide is Glutamyl-tRNA(Gln) amidotransferase subunit A (Lacticaseibacillus paracasei (strain ATCC 334 / BCRC 17002 / CCUG 31169 / CIP 107868 / KCTC 3260 / NRRL B-441) (Lactobacillus paracasei)).